The chain runs to 162 residues: UPF0102 protein Bpet0439 (162 aa).

The disordered stretch occupies residues 15–52; it reads QAQQRQMKRRRAAAHRAARGPAPARAPRASPTQRTGTA. Basic residues predominate over residues 20–32; the sequence is QMKRRRAAAHRAA. Positions 33–48 are enriched in low complexity; it reads RGPAPARAPRASPTQR.

Belongs to the UPF0102 family.

The polypeptide is UPF0102 protein Bpet0439 (Bordetella petrii (strain ATCC BAA-461 / DSM 12804 / CCUG 43448)).